The chain runs to 440 residues: UDP-N-acetylmuramoylalanine--D-glutamate ligase (440 aa).

An ATP-binding site is contributed by 115-121 (GSNGKST).

This sequence belongs to the MurCDEF family.

The protein resides in the cytoplasm. It catalyses the reaction UDP-N-acetyl-alpha-D-muramoyl-L-alanine + D-glutamate + ATP = UDP-N-acetyl-alpha-D-muramoyl-L-alanyl-D-glutamate + ADP + phosphate + H(+). The protein operates within cell wall biogenesis; peptidoglycan biosynthesis. Cell wall formation. Catalyzes the addition of glutamate to the nucleotide precursor UDP-N-acetylmuramoyl-L-alanine (UMA). This Vibrio cholerae serotype O1 (strain ATCC 39315 / El Tor Inaba N16961) protein is UDP-N-acetylmuramoylalanine--D-glutamate ligase.